The following is a 566-amino-acid chain: NAD-dependent malic enzyme (566 aa).

The active-site Proton donor is the Y105. Position 158 (R158) interacts with NAD(+). K176 (proton acceptor) is an active-site residue. A divalent metal cation is bound by residues E247, D248, and D271. 2 residues coordinate NAD(+): D271 and N419.

It belongs to the malic enzymes family. Homotetramer. Requires Mg(2+) as cofactor. Mn(2+) serves as cofactor.

The catalysed reaction is (S)-malate + NAD(+) = pyruvate + CO2 + NADH. It catalyses the reaction oxaloacetate + H(+) = pyruvate + CO2. The polypeptide is NAD-dependent malic enzyme (Acinetobacter baylyi (strain ATCC 33305 / BD413 / ADP1)).